The following is a 192-amino-acid chain: dTTP/UTP pyrophosphatase (192 aa).

D70 functions as the Proton acceptor in the catalytic mechanism.

The protein belongs to the Maf family. YhdE subfamily. A divalent metal cation serves as cofactor.

The protein localises to the cytoplasm. The enzyme catalyses dTTP + H2O = dTMP + diphosphate + H(+). It catalyses the reaction UTP + H2O = UMP + diphosphate + H(+). In terms of biological role, nucleoside triphosphate pyrophosphatase that hydrolyzes dTTP and UTP. May have a dual role in cell division arrest and in preventing the incorporation of modified nucleotides into cellular nucleic acids. The polypeptide is dTTP/UTP pyrophosphatase (Clostridium perfringens (strain ATCC 13124 / DSM 756 / JCM 1290 / NCIMB 6125 / NCTC 8237 / Type A)).